Reading from the N-terminus, the 275-residue chain is Reticulon-like protein B1 (275 aa).

Basic and acidic residues-rich tracts occupy residues 1–10 (MAEEHKHDES) and 20–38 (VVERESLMDKISEKIHHGG). The disordered stretch occupies residues 1–68 (MAEEHKHDES…PSSPSSSMKS (68 aa)). A2 carries the post-translational modification N-acetylalanine. Over residues 59-68 (PSSPSSSMKS) the composition is skewed to low complexity. Residues 89–274 (PADIFMWKNK…PLGPLKNKKK (186 aa)) form the Reticulon domain. A run of 3 helical transmembrane segments spans residues 99–119 (KMSGGVLGGATAAWVVFELME), 120–140 (YHLLTLLCHVMIVVLAVLFLW), and 194–214 (FLIAIAGLWVLSILGGCFNFL).

Interacts with VirB2. As to expression, predominantly expressed in root tissues.

The protein resides in the endoplasmic reticulum membrane. The protein localises to the cell membrane. Functionally, plays a role in the Agrobacterium-mediated plant transformation via its interaction with VirB2, the major component of the T-pilus. The protein is Reticulon-like protein B1 (RTNLB1) of Arabidopsis thaliana (Mouse-ear cress).